We begin with the raw amino-acid sequence, 245 residues long: Gem-associated protein 2 (245 aa).

This sequence belongs to the gemin-2 family. Component of the core survival motor neuron (SMN) complex composed of Smn, Gem2, Gem3, rig/Gem5 and one of 3 almost identical Gem4 paralogs encoded by Glos/Gem4a, Gem4b or Gem4c. Part of a minimal SMN complex composed of Smn and Gem2 only; this complex is active in UsnRNP assembly. The SMN complex associates with the entire set of spliceosomal snRNP Sm proteins, SmB, SmD1, SmD2, SmD3, SmE, SmF and SmG, and with the snRNP-specific proteins snRNP-U1-70K, U2A, snf/U1A and U5-116KD. Expressed in nurse cells and oocytes.

It localises to the cytoplasm. It is found in the U-body. Functionally, component of the survival motor neuron (SMN) complex that catalyzes the assembly of small nuclear ribonucleoproteins (snRNPs), the building blocks of the spliceosome, and thereby plays an important role in the splicing of cellular pre-mRNAs. Most spliceosomal snRNPs contain a common set of Sm proteins SNRPB, SNRPD1, SNRPD2, SNRPD3, SNRPE, SNRPF and SNRPG that assemble in a heptameric protein ring on the Sm site of the small nuclear RNA to form the core snRNP (Sm core). In the cytosol, the Sm proteins SNRPD1, SNRPD2, SNRPE, SNRPF and SNRPG (5Sm) are trapped in an inactive 6S pICln-Sm complex by the chaperone CLNS1A that controls the assembly of the core snRNP. To assemble core snRNPs, the SMN complex accepts the trapped 5Sm proteins from CLNS1A. Binding of snRNA inside 5Sm ultimately triggers eviction of the SMN complex, thereby allowing binding of SNRPD3 and SNRPB to complete assembly of the core snRNP. Within the SMN complex, GEMIN2 constrains the conformation of 5Sm, thereby promoting 5Sm binding to snRNA containing the snRNP code (a nonameric Sm site and a 3'-adjacent stem-loop), thus preventing progression of assembly until a cognate substrate is bound. Involved in adult motor function. The chain is Gem-associated protein 2 from Drosophila melanogaster (Fruit fly).